Here is a 1453-residue protein sequence, read N- to C-terminus: Collagen alpha-1(I) chain (1453 aa).

The N-terminal stretch at 1 to 22 is a signal peptide; that stretch reads MFSFVDLRLLLLLGATALLTHG. A propeptide spans 23 to 151 (N-terminal propeptide); the sequence is QEDIPEVSCI…PPGLGGNFAS (129 aa). The 59-residue stretch at 29–87 folds into the VWFC domain; the sequence is VSCIHNGLRVPNGETWKPEVCLICICHNGTAVCDDVQCNEELDCPNPQRREGECCAFCP. Asn-56 carries an N-linked (GlcNAc...) asparagine glycan. The disordered stretch occupies residues 94-1210; that stretch reads NSEDVGVEGP…GGRYYRADDA (1117 aa). Composition is skewed to pro residues over residues 109 to 118 and 128 to 143; these read PQGPRGPVGP and PGLP…PGPP. The nonhelical region (N-terminal) stretch occupies residues 152–167; it reads QMSYGYDEKSAGVSVP. The residue at position 160 (Lys-160) is an Allysine. Ser-161 carries the phosphoserine modification. The triple-helical region stretch occupies residues 168 to 1181; it reads GPMGPSGPRG…PGPPGPPGPP (1014 aa). Pro-179, Pro-182, Pro-185, Pro-194, Pro-197, Pro-200, Pro-215, Pro-230, Pro-236, Pro-245, and Pro-251 each carry 4-hydroxyproline. Over residues 198 to 207 the composition is skewed to gly residues; it reads GEPGGSGPMG. A compositionally biased stretch (basic and acidic residues) spans 218 to 232; sequence NGDDGEAGKPGRPGE. A 5-hydroxylysine; alternate modification is found at Lys-254. Lys-254 is a glycosylation site (O-linked (Gal...) hydroxylysine; alternate). Ser-260 carries the phosphoserine modification. A compositionally biased stretch (low complexity) spans 268–284; sequence DAGPAGPKGEPGSPGEN. A 4-hydroxyproline mark is found at Pro-278, Pro-281, Pro-287, Pro-296, and Pro-302. The span at 307–320 shows a compositional bias: low complexity; that stretch reads TAGARGNDGAVGAA. Residues 322–334 are compositionally biased toward pro residues; the sequence is PPGPTGPTGPPGF. 4-hydroxyproline occurs at positions 323, 332, 335, 362, 365, 377, 383, 392, 398, 401, and 416. Low complexity predominate over residues 368-407; the sequence is AGAAGPAGNPGADGQPGAKGANGAPGIAGAPGFPGARGPS. Residue Lys-419 is modified to 5-hydroxylysine. 4-hydroxyproline occurs at positions 425, 428, 440, 449, 464, 470, 479, and 485. Over residues 474 to 483 the composition is skewed to gly residues; that stretch reads GERGGPGSRG. A 5-hydroxylysine modification is found at Lys-494. Positions 499–515 are enriched in low complexity; it reads ERGAPGPAGPKGSPGEA. 4-hydroxyproline occurs at positions 503, 512, 518, 524, 533, 536, 545, 554, 560, 572, 581, 590, 593, 611, 629, 635, 641, 647, 653, 659, 671, 680, 692, 704, 707, 713, 719, and 728. Residues 527 to 566 are compositionally biased toward low complexity; it reads KGLTGSPGSPGPDGKTGPPGPAGQDGRPGPAGPPGARGQA. The span at 623 to 650 shows a compositional bias: low complexity; sequence QGPAGSPGFQGLPGPAGPPGEAGKPGEQ. Composition is skewed to low complexity over residues 685–695 and 703–716; these read PRGNNGAPGND and APGA…PGLQ. The Cell attachment site signature appears at 734–736; it reads RGD. Position 740 is a 5-hydroxylysine (Lys-740). 4-hydroxyproline is present on residues Pro-746, Pro-761, and Pro-767. Residue Ser-776 is modified to Phosphoserine. 7 positions are modified to 4-hydroxyproline: Pro-788, Pro-797, Pro-806, Pro-812, Pro-830, Pro-839, and Pro-848. Over residues 800–815 the composition is skewed to low complexity; it reads AGFAGPPGADGQPGAK. Residues 829 to 841 show a composition bias toward pro residues; that stretch reads PPGPAGPAGPPGP. Positions 842-872 are enriched in low complexity; it reads IGNVGAPGPKGPRGAAGPPGATGFPGAAGRV. Lys-851 bears the 5-hydroxylysine mark. Pro-860 and Pro-866 each carry 4-hydroxyproline. A 3-hydroxyproline modification is found at Pro-874. Pro-875, Pro-884, Pro-887, Pro-908, Pro-917, Pro-926, Pro-935, Pro-953, Pro-962, Pro-965, Pro-971, Pro-986, Pro-992, Pro-998, Pro-1007, and Pro-1013 each carry 4-hydroxyproline. Positions 901-910 are enriched in low complexity; the sequence is ETGPAGRPGE. Residues 920–935 show a composition bias toward low complexity; it reads AGEKGSPGADGPAGSP. Pro residues predominate over residues 985 to 995; sequence PPGPMGPPGLA. Positions 997 to 1012 are enriched in low complexity; sequence PPGESGREGSPGAEGS. Lys-1022 bears the 5-hydroxylysine mark. The span at 1031-1046 shows a compositional bias: pro residues; that stretch reads AGPPGAPGAPGAPGPV. A 4-hydroxyproline mark is found at Pro-1034, Pro-1037, and Pro-1040. Residues 1067–1081 are compositionally biased toward low complexity; the sequence is IGPAGARGPAGPQGP. The Cell attachment site signature appears at 1082 to 1084; the sequence is RGD. Residues 1082–1096 are compositionally biased toward basic and acidic residues; that stretch reads RGDKGETGEQGDRGI. Residue Lys-1085 is modified to 5-hydroxylysine. Position 1097 is a 5-hydroxylysine; alternate (Lys-1097). O-linked (Gal...) hydroxylysine; alternate glycosylation is present at Lys-1097. Low complexity predominate over residues 1102-1148; the sequence is FSGLQGPPGSPGSPGEQGPSGASGPAGPRGPPGSAGSPGKDGLNGLP. 4-hydroxyproline is present on residues Pro-1109, Pro-1112, Pro-1115, Pro-1133, and Pro-1148. Pro-1153 carries the post-translational modification 3-hydroxyproline. At Pro-1154 the chain carries 4-hydroxyproline. Residues 1166–1181 are compositionally biased toward pro residues; sequence AGPPGPPGPPGPPGPP. Position 1168 is a 3-hydroxyproline (Pro-1168). Pro-1169 is modified (4-hydroxyproline). The residue at position 1171 (Pro-1171) is a 3-hydroxyproline. A 4-hydroxyproline modification is found at Pro-1172. Position 1174 is a 3-hydroxyproline (Pro-1174). 4-hydroxyproline is present on residues Pro-1175, Pro-1178, and Pro-1181. Residues 1182–1207 are nonhelical region (C-terminal); it reads SGGYDFSFLPQPPQEKSQDGGRYYRA. At Lys-1197 the chain carries Allysine. Residues 1197-1210 show a composition bias toward basic and acidic residues; it reads KSQDGGRYYRADDA. Positions 1208–1453 are cleaved as a propeptide — C-terminal propeptide; the sequence is DDANVVRDRD…GLDIGPACFV (246 aa). Residues 1218–1453 enclose the Fibrillar collagen NC1 domain; the sequence is LEVDTTLKSL…GLDIGPACFV (236 aa). Disulfide bonds link Cys-1248–Cys-1280, Cys-1288–Cys-1451, and Cys-1359–Cys-1404. 5 residues coordinate Ca(2+): Asp-1266, Asn-1268, Gln-1269, Cys-1271, and Asp-1274. The N-linked (GlcNAc...) asparagine glycan is linked to Asn-1354.

This sequence belongs to the fibrillar collagen family. In terms of assembly, trimers of one alpha 2(I) and two alpha 1(I) chains. Interacts with MRC2. Interacts with TRAM2. Interacts with MFAP4 in a Ca (2+)-dependent manner. Contains mostly 4-hydroxyproline. Proline residues at the third position of the tripeptide repeating unit (G-X-Y) are hydroxylated in some or all of the chains. In terms of processing, contains 3-hydroxyproline at a few sites. This modification occurs on the first proline residue in the sequence motif Gly-Pro-Hyp, where Hyp is 4-hydroxyproline. Post-translationally, lysine residues at the third position of the tripeptide repeating unit (G-X-Y) are 5-hydroxylated in some or all of the chains. O-glycosylated on hydroxylated lysine residues. The O-linked glycan consists of a Glc-Gal disaccharide. Forms the fibrils of tendon, ligaments and bones. In bones the fibrils are mineralized with calcium hydroxyapatite.

Its subcellular location is the secreted. It localises to the extracellular space. The protein resides in the extracellular matrix. Its function is as follows. Type I collagen is a member of group I collagen (fibrillar forming collagen). In Mus musculus (Mouse), this protein is Collagen alpha-1(I) chain.